Consider the following 351-residue polypeptide: CREB homolog crh-2 (351 aa).

Disordered regions lie at residues 46 to 104 (EPCT…EPLG) and 119 to 149 (SPSA…HQQQ). Over residues 82 to 95 (GSSSGSPSSSLSSP) the composition is skewed to low complexity. The bZIP domain maps to 282–345 (SLKIVRRKIK…RDLQQKLHQY (64 aa)). Residues 284-304 (KIVRRKIKNKLSAQESRRKRK) form a basic motif region. Residues 307–314 (IDALEGRL) form a leucine-zipper region.

The protein belongs to the bZIP family.

The protein localises to the nucleus. Functionally, transcription factor. Plays a role in regulating the developmentally arrested larval state known as dauer, when induced by long-term exposure to the Gram-negative bacterium P.aeruginosa PAO1, but dispensable for dauer formation induced by starvation. Involved in regulating expression of microRNA mir-243, during long-term exposure to P.aeruginosa PAO1. This chain is CREB homolog crh-2, found in Caenorhabditis elegans.